The sequence spans 618 residues: Manganese lipoxygenase (618 aa).

The first 16 residues, 1-16 (MRSRILAIVFAARHVA), serve as a signal peptide directing secretion. Residues 36-45 (SSTTVLPSPT) are compositionally biased toward low complexity. Residues 36–58 (SSTTVLPSPTQYTLPNNDPNQGA) form a disordered region. A compositionally biased stretch (polar residues) spans 46 to 58 (QYTLPNNDPNQGA). A Lipoxygenase domain is found at 47 to 618 (YTLPNNDPNQ…PAVNPFFLSV (572 aa)). 5 N-linked (GlcNAc...) asparagine glycosylation sites follow: N60, N91, N106, N116, and N157. Mn(2+) contacts are provided by H290, H294, H478, and N482. N513 carries N-linked (GlcNAc...) asparagine glycosylation. V618 lines the Mn(2+) pocket.

The protein belongs to the lipoxygenase family. Manganese lipoxygenase subfamily. Requires Mn(2+) as cofactor. In terms of processing, N- and O-glycosylated.

The protein resides in the secreted. It carries out the reaction (9Z,12Z)-octadecadienoate + O2 = (11S)-hydroperoxy-(9Z,12Z)-octadecadienoate. It catalyses the reaction (9Z,12Z)-octadecadienoate + O2 = (13R)-hydroperoxy-(9Z,11E)-octadecadienoate. The enzyme catalyses (9Z,12Z,15Z)-octadecatrienoate + O2 = (11S)-hydroperoxy-(9Z,12Z,15Z)-octadecatrienoate. The catalysed reaction is (9Z,12Z,15Z)-octadecatrienoate + O2 = (13R)-hydroperoxy-(9Z,11E,15Z)-octadecatrienoate. Lipoxygenase that metabolizes linoleic and alpha-linolenic acids to 11S- and 13R-hydroperoxy fatty acids. At the end of lipoxygenation, the intermediate product 11S-HPODE from linoleic acid is then transformed into 13R-HPODE as the final product. It also acts on alpha-linolenic acid producing 11S-HPOTrE and 13R-HPOTrE with subsequent transformation of 11S-HPOTrE to 13R-HPOTrE as final product. This Gaeumannomyces avenae (Oat take-all root rot fungus) protein is Manganese lipoxygenase.